A 204-amino-acid polypeptide reads, in one-letter code: Large ribosomal subunit protein uL4 (204 aa).

Residues Lys47–Gly69 are disordered.

Belongs to the universal ribosomal protein uL4 family. In terms of assembly, part of the 50S ribosomal subunit.

Its function is as follows. One of the primary rRNA binding proteins, this protein initially binds near the 5'-end of the 23S rRNA. It is important during the early stages of 50S assembly. It makes multiple contacts with different domains of the 23S rRNA in the assembled 50S subunit and ribosome. Forms part of the polypeptide exit tunnel. In Cellvibrio japonicus (strain Ueda107) (Pseudomonas fluorescens subsp. cellulosa), this protein is Large ribosomal subunit protein uL4.